A 108-amino-acid polypeptide reads, in one-letter code: Parvalbumin beta 2 (108 aa).

A1 carries the N-acetylalanine modification. EF-hand domains lie at 38-73 (KSAA…FSAG) and 77-108 (LTDA…MVKG). Ca(2+)-binding residues include D51, D53, S55, F57, E59, E62, D90, D92, D94, K96, and E101.

This sequence belongs to the parvalbumin family.

In terms of biological role, in muscle, parvalbumin is thought to be involved in relaxation after contraction. It binds two calcium ions. This is Parvalbumin beta 2 from Merluccius bilinearis (Silver hake).